The following is a 112-amino-acid chain: Putative pterin-4-alpha-carbinolamine dehydratase (112 aa).

This sequence belongs to the pterin-4-alpha-carbinolamine dehydratase family.

It carries out the reaction (4aS,6R)-4a-hydroxy-L-erythro-5,6,7,8-tetrahydrobiopterin = (6R)-L-erythro-6,7-dihydrobiopterin + H2O. The chain is Putative pterin-4-alpha-carbinolamine dehydratase from Shewanella oneidensis (strain ATCC 700550 / JCM 31522 / CIP 106686 / LMG 19005 / NCIMB 14063 / MR-1).